The chain runs to 131 residues: Translation initiation factor 5A (131 aa).

Residue Lys-37 is modified to Hypusine.

It belongs to the eIF-5A family.

The protein resides in the cytoplasm. Functionally, functions by promoting the formation of the first peptide bond. The chain is Translation initiation factor 5A (eIF5A) from Methanococcus maripaludis (strain C6 / ATCC BAA-1332).